The primary structure comprises 254 residues: uncharacterized protein (254 aa).

Cys-71 serves as the catalytic Acyl-thioester intermediate. Active-site residues include His-110 and Asp-125.

It belongs to the arylamine N-acetyltransferase family.

This is an uncharacterized protein from Bacillus subtilis (strain 168).